The chain runs to 555 residues: WRKY transcription factor WRKY24 (555 aa).

2 disordered regions span residues 38 to 65 and 132 to 248; these read GGGG…PSSF and QTAP…CTFP. Residues 51-61 show a composition bias toward pro residues; sequence PSLPLSPPPVS. Positions 163 to 194 are enriched in low complexity; it reads QQQQQPWGYQQQPAGMDAGANAASFGAAPFQA. A DNA-binding region (WRKY 1) is located at residues 214 to 278; it reads SQRRSSDDGY…YKGTHNHAKP (65 aa). Positions 253 to 259 match the Nuclear localization signal motif; the sequence is KKKVERS. The tract at residues 270-367 is disordered; the sequence is KGTHNHAKPQ…EGISMAGNRT (98 aa). Composition is skewed to polar residues over residues 277-294 and 310-320; these read KPQN…QVLQ and TAATPENSSAS. Basic and acidic residues predominate over residues 347–356; that stretch reads DSKRWRKDGD. A DNA-binding region (WRKY 2) is located at residues 379–444; sequence SDIDILDDGY…YEGKHNHDVP (66 aa). A transcription repression of gibberellic acid (GA)-induced promoters region spans residues 466 to 555; sequence HPYLPNQPPP…DDMFFQNSLY (90 aa). 2 disordered regions span residues 471–498 and 513–555; these read NQPP…GQGP and GFDD…NSLY.

It belongs to the WRKY group II-a family. As to expression, expressed in aleurone cells. Mostly expressed in aleurone layers and leaves, and, to a lower extent, in roots, panicles and embryos.

The protein localises to the nucleus. Its function is as follows. Transcription repressor. Interacts specifically with the W box (5'-(T)TGAC[CT]-3'), a frequently occurring elicitor-responsive cis-acting element. Negative regulator of both gibberellic acid (GA) and abscisic acid (ABA) signaling in aleurone cells, probably by interfering with GAM1, via the specific repression of GA- and ABA-induced promoters. This is WRKY transcription factor WRKY24 from Oryza sativa subsp. indica (Rice).